Here is a 673-residue protein sequence, read N- to C-terminus: Putative potassium transport system protein Kup 1 (673 aa).

The next 13 membrane-spanning stretches (helical) occupy residues 14-34 (GAGF…SPLY), 58-78 (LSLI…WIAL), 101-121 (WLII…ALTP), 147-167 (LPIV…QRFG), 175-195 (FGPV…INLF), 196-216 (GDFS…LLSP), 220-240 (AGIF…ALYS), 252-272 (VSWP…AAWL), 294-314 (LIIF…QALI), 345-365 (LYIP…VVYF), 374-394 (AYGL…TVYL), 403-423 (VFVV…FAAS), and 427-447 (FLHG…VMAI).

It belongs to the HAK/KUP transporter (TC 2.A.72) family.

It is found in the cell membrane. The catalysed reaction is K(+)(in) + H(+)(in) = K(+)(out) + H(+)(out). Transport of potassium into the cell. Likely operates as a K(+):H(+) symporter. In Lactococcus lactis subsp. cremoris (strain MG1363), this protein is Putative potassium transport system protein Kup 1.